A 134-amino-acid polypeptide reads, in one-letter code: MDSRTGELLTAAQSENGVYIWTVKNPLYFKITKHHERPFLRNHDIITIQVQFNYNLRKALGIHKCFLTCQIWTRLHPQTSHFLRVFKYQFIKYLDRLGVISINNCIRAFSHVLYDVLNGTIDVIEKHDIKFNIY.

Belongs to the geminiviridae replication enhancer protein family. Homooligomer. Interacts with the replication-associated protein (REP). Interacts with host proliferating cell nuclear antigen (PCNA). Interacts with host retinoblastoma-related protein 1 (RBR1), and may thereby deregulate the host cell cycle. Oligomerization and interaction with PCNA are necessary for optimal replication enhancement.

Functionally, increases viral DNA accumulation. Enhances infectivity and symptom expression. The polypeptide is Replication enhancer protein (Nicotiana tabacum (Common tobacco)).